A 250-amino-acid chain; its full sequence is Envelope glycoprotein L (250 aa).

The N-terminal stretch at 1–18 (MELLLFVMSLILLTFSKA) is a signal peptide. The region spanning 31–239 (KLDDCIAAVI…EAYNSKLPFR (209 aa)) is the gL betaherpesvirus-type domain. Residues cysteine 136 and cysteine 141 are joined by a disulfide bond.

The protein belongs to the herpesviridae glycoprotein L (gL) family. Betaherpesvirinae gL subfamily. In terms of assembly, interacts with glycoprotein H (gH); this interaction is necessary for the correct processing and cell surface expression of gH. Part of a gH-gL-gO complex.

Its subcellular location is the virion membrane. It is found in the host cell membrane. The protein localises to the host Golgi apparatus. It localises to the host trans-Golgi network. Functionally, the heterodimer glycoprotein H-glycoprotein L is required for the fusion of viral and plasma membranes leading to virus entry into the host cell. Acts as a functional inhibitor of gH and maintains gH in an inhibited form. Upon binding to host integrins, gL dissociates from gH leading to activation of the viral fusion glycoproteins gB and gH. The sequence is that of Envelope glycoprotein L from Homo sapiens (Human).